The sequence spans 812 residues: Lon protease (812 aa).

Positions 22–215 (YAVLPLRDIV…KALSFMEAEI (194 aa)) constitute a Lon N-terminal domain. Position 367 to 374 (367 to 374 (GPPGVGKT)) interacts with ATP. The 182-residue stretch at 602–783 (EDQVGVVTGL…GEVLKHALVR (182 aa)) folds into the Lon proteolytic domain. Active-site residues include S689 and K732. Residues 787–812 (PIEWTEQENPTAVPPVEDEAGASLAH) form a disordered region.

It belongs to the peptidase S16 family. In terms of assembly, homohexamer. Organized in a ring with a central cavity.

It is found in the cytoplasm. It catalyses the reaction Hydrolysis of proteins in presence of ATP.. ATP-dependent serine protease that mediates the selective degradation of mutant and abnormal proteins as well as certain short-lived regulatory proteins. Required for cellular homeostasis and for survival from DNA damage and developmental changes induced by stress. Degrades polypeptides processively to yield small peptide fragments that are 5 to 10 amino acids long. Binds to DNA in a double-stranded, site-specific manner. Required for wild-type virulence during the initial stages of infection in the mouse model, but not essential for the establishment and maintenance of chronic infection in this host. The sequence is that of Lon protease from Brucella abortus (strain 2308).